A 118-amino-acid chain; its full sequence is MARIAGINIPDQKHTVIALTGIFGIGRTRARAICAATSIAEDAKIKELSEAQIDILREAVAEYTVEGDLRREVSMNIKRLMDLGCYRGIRHRRSLPLRGQRTKTNARTRKGPRKPIRK.

Positions 94 to 118 (SLPLRGQRTKTNARTRKGPRKPIRK) are disordered.

The protein belongs to the universal ribosomal protein uS13 family. In terms of assembly, part of the 30S ribosomal subunit. Forms a loose heterodimer with protein S19. Forms two bridges to the 50S subunit in the 70S ribosome.

Functionally, located at the top of the head of the 30S subunit, it contacts several helices of the 16S rRNA. In the 70S ribosome it contacts the 23S rRNA (bridge B1a) and protein L5 of the 50S subunit (bridge B1b), connecting the 2 subunits; these bridges are implicated in subunit movement. Contacts the tRNAs in the A and P-sites. The protein is Small ribosomal subunit protein uS13 of Shewanella violacea (strain JCM 10179 / CIP 106290 / LMG 19151 / DSS12).